A 91-amino-acid chain; its full sequence is ATP-dependent Clp protease adapter protein ClpS (91 aa).

It belongs to the ClpS family. Binds to the N-terminal domain of the chaperone ClpA.

Involved in the modulation of the specificity of the ClpAP-mediated ATP-dependent protein degradation. This Helicobacter pylori (strain ATCC 700392 / 26695) (Campylobacter pylori) protein is ATP-dependent Clp protease adapter protein ClpS.